The following is a 297-amino-acid chain: 4-diphosphocytidyl-2-C-methyl-D-erythritol kinase (297 aa).

Residue Lys-14 is part of the active site. Residue 99 to 109 (PVAAGIGGGSA) coordinates ATP. Residue Asp-141 is part of the active site.

This sequence belongs to the GHMP kinase family. IspE subfamily.

The catalysed reaction is 4-CDP-2-C-methyl-D-erythritol + ATP = 4-CDP-2-C-methyl-D-erythritol 2-phosphate + ADP + H(+). The protein operates within isoprenoid biosynthesis; isopentenyl diphosphate biosynthesis via DXP pathway; isopentenyl diphosphate from 1-deoxy-D-xylulose 5-phosphate: step 3/6. Its function is as follows. Catalyzes the phosphorylation of the position 2 hydroxy group of 4-diphosphocytidyl-2C-methyl-D-erythritol. In Bradyrhizobium diazoefficiens (strain JCM 10833 / BCRC 13528 / IAM 13628 / NBRC 14792 / USDA 110), this protein is 4-diphosphocytidyl-2-C-methyl-D-erythritol kinase.